Reading from the N-terminus, the 1097-residue chain is Protease Do-like 7 (1097 aa).

The interval 55 to 243 (VLRTTACRAF…LPLQRVVRAL (189 aa)) is serine protease. In terms of domain architecture, PDZ spans 269-366 (MTFLHKGFDE…RGGQPLSVSV (98 aa)). The active-site Charge relay system is the histidine 524. A compositionally biased stretch (polar residues) spans 546 to 556 (TSSGDGSQNDF). Residues 546 to 577 (TSSGDGSQNDFGSEAKKQRVDEDSSDGIAANG) are disordered. The segment covering 558 to 567 (SEAKKQRVDE) has biased composition (basic and acidic residues). The active-site Charge relay system is serine 785.

Belongs to the peptidase S1C family.

It is found in the cytoplasm. In terms of biological role, probable serine protease. The protein is Protease Do-like 7 (DEGP7) of Arabidopsis thaliana (Mouse-ear cress).